We begin with the raw amino-acid sequence, 579 residues long: Glutamine--tRNA ligase (579 aa).

The short motif at 41 to 51 (PEPNGYLHIGH) is the 'HIGH' region element. Residues 42–44 (EPN) and 48–54 (HIGHAKA) contribute to the ATP site. The L-glutamine site is built by aspartate 74 and tyrosine 218. Residues threonine 237, 285–286 (RL), and 293–295 (MSK) contribute to the ATP site. Residues 292-296 (VMSKR) carry the 'KMSKS' region motif.

The protein belongs to the class-I aminoacyl-tRNA synthetase family. In terms of assembly, monomer.

The protein localises to the cytoplasm. The catalysed reaction is tRNA(Gln) + L-glutamine + ATP = L-glutaminyl-tRNA(Gln) + AMP + diphosphate. In Xanthomonas axonopodis pv. citri (strain 306), this protein is Glutamine--tRNA ligase.